We begin with the raw amino-acid sequence, 312 residues long: Ribosomal RNA small subunit methyltransferase H (312 aa).

S-adenosyl-L-methionine is bound by residues 33 to 35 (SGH), Asp53, Phe80, Asp101, and Gln108.

It belongs to the methyltransferase superfamily. RsmH family.

It is found in the cytoplasm. The enzyme catalyses cytidine(1402) in 16S rRNA + S-adenosyl-L-methionine = N(4)-methylcytidine(1402) in 16S rRNA + S-adenosyl-L-homocysteine + H(+). Specifically methylates the N4 position of cytidine in position 1402 (C1402) of 16S rRNA. The sequence is that of Ribosomal RNA small subunit methyltransferase H from Desulforapulum autotrophicum (strain ATCC 43914 / DSM 3382 / VKM B-1955 / HRM2) (Desulfobacterium autotrophicum).